A 589-amino-acid chain; its full sequence is ATP-dependent lipid A-core flippase (589 aa).

Transmembrane regions (helical) follow at residues 33–53, 70–90, 148–168, 170–190, 262–282, and 283–303; these read VLAI…AWII, LWVP…TFAS, VVVL…MTYL, GWLV…VTAA, LGAV…VILE, and TISP…LPPL. The ABC transmembrane type-1 domain maps to 33–315; it reads VLAIVCMVLA…VIGVNAEIQK (283 aa). Residues 347-583 enclose the ABC transporter domain; sequence IEFDRVAFRY…NGHYASLHRV (237 aa). An ATP-binding site is contributed by 381 to 388; the sequence is GRSGSGKT.

This sequence belongs to the ABC transporter superfamily. Lipid exporter (TC 3.A.1.106) family. Homodimer.

It is found in the cell inner membrane. It carries out the reaction ATP + H2O + lipid A-core oligosaccharideSide 1 = ADP + phosphate + lipid A-core oligosaccharideSide 2.. Functionally, involved in lipopolysaccharide (LPS) biosynthesis. Translocates lipid A-core from the inner to the outer leaflet of the inner membrane. Transmembrane domains (TMD) form a pore in the inner membrane and the ATP-binding domain (NBD) is responsible for energy generation. This Alkalilimnicola ehrlichii (strain ATCC BAA-1101 / DSM 17681 / MLHE-1) protein is ATP-dependent lipid A-core flippase.